A 416-amino-acid polypeptide reads, in one-letter code: Gamma-glutamyl phosphate reductase (416 aa).

It belongs to the gamma-glutamyl phosphate reductase family.

It is found in the cytoplasm. It catalyses the reaction L-glutamate 5-semialdehyde + phosphate + NADP(+) = L-glutamyl 5-phosphate + NADPH + H(+). It functions in the pathway amino-acid biosynthesis; L-proline biosynthesis; L-glutamate 5-semialdehyde from L-glutamate: step 2/2. In terms of biological role, catalyzes the NADPH-dependent reduction of L-glutamate 5-phosphate into L-glutamate 5-semialdehyde and phosphate. The product spontaneously undergoes cyclization to form 1-pyrroline-5-carboxylate. The polypeptide is Gamma-glutamyl phosphate reductase (Salmonella paratyphi C (strain RKS4594)).